A 135-amino-acid chain; its full sequence is Bacilliredoxin CHU_0972 (135 aa).

This sequence belongs to the bacilliredoxin family.

This chain is Bacilliredoxin CHU_0972, found in Cytophaga hutchinsonii (strain ATCC 33406 / DSM 1761 / CIP 103989 / NBRC 15051 / NCIMB 9469 / D465).